Consider the following 162-residue polypeptide: uncharacterized protein (162 aa).

The segment covering 65 to 76 (EEKPLEVAQDRN) has biased composition (basic and acidic residues). The segment at 65 to 93 (EEKPLEVAQDRNNKRKAPSHLEPAHDFIS) is disordered.

This is an uncharacterized protein from Bacillus subtilis (strain 168).